Reading from the N-terminus, the 273-residue chain is Hydroxyethylthiazole kinase (273 aa).

Methionine 47 lines the substrate pocket. ATP is bound by residues arginine 123 and threonine 172. Glycine 199 contacts substrate.

It belongs to the Thz kinase family. Requires Mg(2+) as cofactor.

The catalysed reaction is 5-(2-hydroxyethyl)-4-methylthiazole + ATP = 4-methyl-5-(2-phosphooxyethyl)-thiazole + ADP + H(+). Its pathway is cofactor biosynthesis; thiamine diphosphate biosynthesis; 4-methyl-5-(2-phosphoethyl)-thiazole from 5-(2-hydroxyethyl)-4-methylthiazole: step 1/1. Functionally, catalyzes the phosphorylation of the hydroxyl group of 4-methyl-5-beta-hydroxyethylthiazole (THZ). The polypeptide is Hydroxyethylthiazole kinase (Ruminiclostridium cellulolyticum (strain ATCC 35319 / DSM 5812 / JCM 6584 / H10) (Clostridium cellulolyticum)).